Reading from the N-terminus, the 484-residue chain is ATP synthase subunit beta (484 aa).

Residue 168–175 (GGAGVGKT) coordinates ATP.

Belongs to the ATPase alpha/beta chains family. As to quaternary structure, F-type ATPases have 2 components, CF(1) - the catalytic core - and CF(0) - the membrane proton channel. CF(1) has five subunits: alpha(3), beta(3), gamma(1), delta(1), epsilon(1). CF(0) has three main subunits: a(1), b(2) and c(9-12). The alpha and beta chains form an alternating ring which encloses part of the gamma chain. CF(1) is attached to CF(0) by a central stalk formed by the gamma and epsilon chains, while a peripheral stalk is formed by the delta and b chains.

Its subcellular location is the cell membrane. The enzyme catalyses ATP + H2O + 4 H(+)(in) = ADP + phosphate + 5 H(+)(out). In terms of biological role, produces ATP from ADP in the presence of a proton gradient across the membrane. The catalytic sites are hosted primarily by the beta subunits. This chain is ATP synthase subunit beta, found in Pseudarthrobacter chlorophenolicus (strain ATCC 700700 / DSM 12829 / CIP 107037 / JCM 12360 / KCTC 9906 / NCIMB 13794 / A6) (Arthrobacter chlorophenolicus).